The primary structure comprises 260 residues: Movement protein (260 aa).

The tract at residues 230 to 260 (SGDTAEEAGEASSGEPHWVPEATAPRVRKAT) is disordered.

In terms of biological role, transports viral genome to neighboring plant cells directly through plasmosdesmata, without any budding. The movement protein allows efficient cell to cell propagation, by bypassing the host cell wall barrier. Might act by forming tubules structures that increase the size exclusion limit (SEL) of plasmodesmata, thereby allowing viral ribonucleoproteins to spread directly to neighboring cells. Binds to ssRNA. This is Movement protein from Groundnut rosette virus (strain MC1) (GRV).